Here is a 533-residue protein sequence, read N- to C-terminus: Lymphocyte cytosolic protein 2 (533 aa).

Positions 12 to 78 constitute an SAM domain; that stretch reads VLAWNSDNLA…SQDINKNEER (67 aa). Y23 is subject to Phosphotyrosine. Disordered stretches follow at residues 78-359 and 374-419; these read RRSI…PLAH and SASL…TPLD. Residues 94–144 show a composition bias toward acidic residues; it reads ETESHEEDDGGWSSFEDDYESPNDDDPDGEDDGDYESPNEEEQALVDDAAD. Positions 151-172 are enriched in polar residues; the sequence is NNEEALQSSILPPNSFHNTNSM. The segment covering 186 to 201 has biased composition (pro residues); it reads PPVPPLRPKPALPPLP. A phosphoserine mark is found at S207 and S210. The span at 340–354 shows a compositional bias: polar residues; the sequence is NTFPSRSVQPSSKNT. 2 positions are modified to phosphoserine: S376 and S410. A compositionally biased stretch (pro residues) spans 400–411; sequence LPVPNRPQPPSP. Positions 422–530 constitute an SH2 domain; it reads WYVSYITRPE…RYQCTLTHAA (109 aa).

As to quaternary structure, interacts with SLA. Interacts with CBLB. Interacts with GRB2. Interacts with SHB. Interacts with PRAM1. Interacts (via SH2 domain) with CD6 (via tyrosine phosphorylated C-terminus). Interacts with FYB1 and the phosphorylated form of FYB2. Interacts with 14-3-3 adapter/YWHAZ; this phosphorylation leads to YWHAZ proteolytic degradation. Interacts with VAV1; this interaction plays a role in TCR-mediated cytokine production. Interacts with AGER; this interaction plays an important role in AGER-mediated pro-inflammatory responses and cytokine release. Post-translationally, phosphorylated after T-cell receptor activation by ZAP70, ITK and TXK, which leads to the up-regulation of Th1 preferred cytokine IL-2. SYK-dependent phosphorylation is required for recruitment of PI3K signaling components. Highly expressed in spleen, thymus, and peripheral blood leukocytes.

It localises to the cytoplasm. In terms of biological role, adapter protein primarily involved in signaling pathways within T-cells, as well as other immune cells such as platelets, mast cells, and natural killer (NK) cells. Plays a crucial role for transducing signal from the T-cell receptor (TCR) after antigen recognition leading to T-cell activation. Mechanistically, once phosphorylated by the kinase ZAP70, mediates interactions with the guanine-nucleotide exchange factor VAV1, the adapter protein NCK and the kinase ITK. In turn, stimulates the activation of PKC-theta/PRKCQ and NF-kappa-B transcriptional activity in response to CD3 and CD28 costimulation. Also plays an essential role in AGER-induced signaling pathways including p38 MAPK and ERK1/2 activation leading to cytokine release and pro-inflammatory responses. This chain is Lymphocyte cytosolic protein 2 (Lcp2), found in Mus musculus (Mouse).